A 347-amino-acid chain; its full sequence is Microtubule-associated protein Jupiter (347 aa).

The segment covering 1-14 (MISNFDCTDNQASS) has biased composition (polar residues). Positions 1-33 (MISNFDCTDNQASSKVLRPPGGGSSDIFGSEMP) are disordered. The residue at position 24 (S24) is a Phosphoserine. Phosphothreonine occurs at positions 35 and 96. Residues S105, S134, and S145 each carry the phosphoserine modification. Disordered stretches follow at residues 127 to 193 (HYNG…PTPP) and 303 to 347 (GNPV…SGLW). Over residues 132 to 145 (SGSVSSASSSVSSS) the composition is skewed to low complexity. Positions 146-164 (TENLKMNSGSRSVFRNMST) are enriched in polar residues. Positions 181-193 (PPSPVPIEVPTPP) are enriched in pro residues.

Belongs to the MAP Jupiter family.

The protein resides in the nucleus. The protein localises to the cytoplasm. It localises to the cytoskeleton. Its subcellular location is the spindle. Binds to all microtubule populations. In Drosophila yakuba (Fruit fly), this protein is Microtubule-associated protein Jupiter.